The primary structure comprises 201 residues: FMN reductase (NADH) RutF 1 (201 aa).

Positions 167–195 (PRAPRSGSAPAEPARAARAVGARPAEGPA) are enriched in low complexity. Residues 167–201 (PRAPRSGSAPAEPARAARAVGARPAEGPALALRSA) are disordered.

The protein belongs to the non-flavoprotein flavin reductase family. RutF subfamily.

The catalysed reaction is FMNH2 + NAD(+) = FMN + NADH + 2 H(+). Catalyzes the reduction of FMN to FMNH2 which is used to reduce pyrimidine by RutA via the Rut pathway. This is FMN reductase (NADH) RutF 1 from Methylorubrum extorquens (strain CM4 / NCIMB 13688) (Methylobacterium extorquens).